The primary structure comprises 266 residues: Small ribosomal subunit protein uS2 (266 aa).

Positions 233-266 (AVREEEFASAPDAGKKGRQAQPKKGKRASDAAAE) are disordered. Over residues 248–258 (KGRQAQPKKGK) the composition is skewed to basic residues.

The protein belongs to the universal ribosomal protein uS2 family.

The sequence is that of Small ribosomal subunit protein uS2 from Xylella fastidiosa (strain M23).